The sequence spans 551 residues: Probable 4-coumarate--CoA ligase 3 (551 aa).

Residues Ser-205, Ser-206, Gly-207, Thr-208, Thr-209, and Lys-213 each coordinate ATP. Phe-253 lines the (E)-4-coumaroyl-AMP pocket. Lys-274 is a CoA binding site. The segment at 276–346 is SBD1; that stretch reads EPVRFLELIK…RFKGRLVIKQ (71 aa). (E)-4-coumaroyl-AMP contacts are provided by Ala-323, Gln-346, Gly-347, and Thr-351. ATP-binding residues include Gln-346, Gly-347, Thr-351, Asp-430, and Arg-445. Residues 347–409 form an SBD2 region; that stretch reads GYGATELSPC…IKGPNVMLGY (63 aa). (E)-4-coumaroyl-AMP-binding residues include Lys-447 and Lys-451. CoA is bound by residues Lys-453 and Gly-454. Residue Lys-537 participates in ATP binding.

It belongs to the ATP-dependent AMP-binding enzyme family. Requires Mg(2+) as cofactor.

It catalyses the reaction (E)-4-coumarate + ATP + CoA = (E)-4-coumaroyl-CoA + AMP + diphosphate. It carries out the reaction (E)-4-coumarate + ATP + H(+) = (E)-4-coumaroyl-AMP + diphosphate. The enzyme catalyses (E)-4-coumaroyl-AMP + CoA = (E)-4-coumaroyl-CoA + AMP + H(+). Its pathway is phytoalexin biosynthesis; 3,4',5-trihydroxystilbene biosynthesis; 3,4',5-trihydroxystilbene from trans-4-coumarate: step 1/2. Carboxylate--CoA ligase that may use 4-coumarate as substrate. Follows a two-step reaction mechanism, wherein the carboxylate substrate first undergoes adenylation by ATP, followed by a thioesterification in the presence of CoA to yield the final CoA thioester. This chain is Probable 4-coumarate--CoA ligase 3 (4cl3), found in Dictyostelium discoideum (Social amoeba).